The following is a 353-amino-acid chain: Ferredoxin--NADP reductase 1 (353 aa).

Asp43, Gln51, Tyr56, Ala96, Phe135, Asp300, and Ser341 together coordinate FAD.

This sequence belongs to the ferredoxin--NADP reductase type 2 family. Homodimer. FAD is required as a cofactor.

It catalyses the reaction 2 reduced [2Fe-2S]-[ferredoxin] + NADP(+) + H(+) = 2 oxidized [2Fe-2S]-[ferredoxin] + NADPH. In Cupriavidus metallidurans (strain ATCC 43123 / DSM 2839 / NBRC 102507 / CH34) (Ralstonia metallidurans), this protein is Ferredoxin--NADP reductase 1.